An 852-amino-acid polypeptide reads, in one-letter code: Phenylalanine--tRNA ligase beta subunit (852 aa).

The 116-residue stretch at 44 to 159 folds into the tRNA-binding domain; it reads PETTGPLVIG…DADLASANLK (116 aa). In terms of domain architecture, B5 spans 428–510; that stretch reads PEMPMITIHT…RLEGLEDIPS (83 aa). The Mg(2+) site is built by aspartate 488, aspartate 494, glutamate 497, and glutamate 498. The FDX-ACB domain maps to 758 to 851; sequence SAFPAVLQDI…ATEKVGAQLR (94 aa).

The protein belongs to the phenylalanyl-tRNA synthetase beta subunit family. Type 1 subfamily. As to quaternary structure, tetramer of two alpha and two beta subunits. Mg(2+) serves as cofactor.

It is found in the cytoplasm. The catalysed reaction is tRNA(Phe) + L-phenylalanine + ATP = L-phenylalanyl-tRNA(Phe) + AMP + diphosphate + H(+). This Corynebacterium jeikeium (strain K411) protein is Phenylalanine--tRNA ligase beta subunit.